The following is a 200-amino-acid chain: Adenylyl-sulfate kinase (200 aa).

Position 35–42 (35–42 (GLPASGKS)) interacts with ATP. S109 acts as the Phosphoserine intermediate in catalysis.

Belongs to the APS kinase family.

The catalysed reaction is adenosine 5'-phosphosulfate + ATP = 3'-phosphoadenylyl sulfate + ADP + H(+). It participates in sulfur metabolism; hydrogen sulfide biosynthesis; sulfite from sulfate: step 2/3. Catalyzes the synthesis of activated sulfate. The chain is Adenylyl-sulfate kinase from Thermodesulfovibrio yellowstonii (strain ATCC 51303 / DSM 11347 / YP87).